A 178-amino-acid polypeptide reads, in one-letter code: Sec-independent protein translocase protein TatB (178 aa).

A helical membrane pass occupies residues 1-21; it reads MFDIGWSELVVIAVVALIAIG. The span at 77 to 86 shows a compositional bias: polar residues; sequence TSGNLMTKLT. The segment at 77–178 is disordered; it reads TSGNLMTKLT…HEAVKDAKAS (102 aa). The segment covering 93-102 has biased composition (basic and acidic residues); that stretch reads PKLEDLDKPA. The span at 155 to 165 shows a compositional bias: low complexity; that stretch reads HATPEPAPATH. Positions 166–178 are enriched in basic and acidic residues; that stretch reads ETPHEAVKDAKAS.

This sequence belongs to the TatB family. As to quaternary structure, the Tat system comprises two distinct complexes: a TatABC complex, containing multiple copies of TatA, TatB and TatC subunits, and a separate TatA complex, containing only TatA subunits. Substrates initially bind to the TatABC complex, which probably triggers association of the separate TatA complex to form the active translocon.

The protein localises to the cell inner membrane. Functionally, part of the twin-arginine translocation (Tat) system that transports large folded proteins containing a characteristic twin-arginine motif in their signal peptide across membranes. Together with TatC, TatB is part of a receptor directly interacting with Tat signal peptides. TatB may form an oligomeric binding site that transiently accommodates folded Tat precursor proteins before their translocation. In Nitrobacter hamburgensis (strain DSM 10229 / NCIMB 13809 / X14), this protein is Sec-independent protein translocase protein TatB.